The chain runs to 180 residues: Pyruvate synthase subunit PorC (180 aa).

Heterotetramer of one alpha, one beta, one delta and one gamma chain.

The enzyme catalyses 2 oxidized [2Fe-2S]-[ferredoxin] + pyruvate + CoA = 2 reduced [2Fe-2S]-[ferredoxin] + acetyl-CoA + CO2 + H(+). The protein is Pyruvate synthase subunit PorC (porC) of Methanothermobacter thermautotrophicus (strain ATCC 29096 / DSM 1053 / JCM 10044 / NBRC 100330 / Delta H) (Methanobacterium thermoautotrophicum).